The following is a 323-amino-acid chain: Octaprenyl diphosphate synthase (323 aa).

Residues lysine 45, arginine 48, and histidine 77 each contribute to the isopentenyl diphosphate site. Mg(2+) contacts are provided by aspartate 84 and aspartate 88. An an all-trans-polyprenyl diphosphate-binding site is contributed by arginine 93. Arginine 94 is a binding site for isopentenyl diphosphate. Lysine 170, threonine 171, and glutamine 208 together coordinate an all-trans-polyprenyl diphosphate.

It belongs to the FPP/GGPP synthase family. Mg(2+) serves as cofactor.

It catalyses the reaction 5 isopentenyl diphosphate + (2E,6E)-farnesyl diphosphate = all-trans-octaprenyl diphosphate + 5 diphosphate. Functionally, supplies octaprenyl diphosphate, the precursor for the side chain of the isoprenoid quinones ubiquinone and menaquinone. The sequence is that of Octaprenyl diphosphate synthase (ispB) from Escherichia coli (strain K12).